The primary structure comprises 240 residues: MGHRISTQSRGKGGPTYRAPSHQYKAELKHFGSALETVRATVIDIEHDPARHTPIAVVKIEGKASDKKEYALITEGVGIGQELVWGPEATVVNGNSLPLSAIPTGVAVCNIEARPGDGGKFVRSSGVQAVIIGKSAGKVGVRMPSGKPKWFNEACLATVGLVAGGGRIDKPILKAGKQYHKMKTSATRWPRVRGVAMNVIDHPFGGGGHQHPGKPKTVARGASPGRKVGSVAARRTGYRR.

A compositionally biased stretch (polar residues) spans 1–10 (MGHRISTQSR). Disordered regions lie at residues 1–20 (MGHR…YRAP) and 204–240 (FGGG…GYRR).

This sequence belongs to the universal ribosomal protein uL2 family. Part of the 50S ribosomal subunit. Forms a bridge to the 30S subunit in the 70S ribosome.

Functionally, one of the primary rRNA binding proteins. Required for association of the 30S and 50S subunits to form the 70S ribosome, for tRNA binding and peptide bond formation. It has been suggested to have peptidyltransferase activity; this is somewhat controversial. Makes several contacts with the 16S rRNA in the 70S ribosome. The protein is Large ribosomal subunit protein uL2 of Methanocorpusculum labreanum (strain ATCC 43576 / DSM 4855 / Z).